A 592-amino-acid chain; its full sequence is Tegument protein US23 (592 aa).

Residues 407 to 491 (PRSLGDGEEE…NNVVPNVERR (85 aa)) are disordered. The segment covering 460-481 (ADDEEQGEDDDDSGAEPMEPEE) has biased composition (acidic residues).

Belongs to the herpesviridae US22 family.

Its subcellular location is the virion tegument. This chain is Tegument protein US23 (US23), found in Homo sapiens (Human).